The chain runs to 493 residues: Keratin, type II cuticular Hb3 (493 aa).

The interval M1–E111 is head. The 312-residue stretch at E111–L422 folds into the IF rod domain. Positions K112–Y146 are coil 1A. Residues Q147 to L156 are linker 1. The tract at residues E157–S257 is coil 1B. Residue K217 forms a Glycyl lysine isopeptide (Lys-Gly) (interchain with G-Cter in SUMO1) linkage. Positions H258–L274 are linker 12. A coil 2 region spans residues N275 to E418. The interval E419–H493 is tail.

It belongs to the intermediate filament family. As to quaternary structure, heterotetramer of two type I and two type II keratins. As to expression, synthesis begins in the cortex 10-15 cell layers above the apex of the dermal papilla and ends abruptly in the middle of the cortex.

This is Keratin, type II cuticular Hb3 (KRT83) from Homo sapiens (Human).